Here is a 109-residue protein sequence, read N- to C-terminus: Nucleoid-associated protein HS_1309 (109 aa).

It belongs to the YbaB/EbfC family. In terms of assembly, homodimer.

The protein resides in the cytoplasm. It is found in the nucleoid. Binds to DNA and alters its conformation. May be involved in regulation of gene expression, nucleoid organization and DNA protection. The sequence is that of Nucleoid-associated protein HS_1309 from Histophilus somni (strain 129Pt) (Haemophilus somnus).